The following is a 382-amino-acid chain: Glutamyl-tRNA reductase (382 aa).

Substrate contacts are provided by residues 38–41 (TCNR), Ser-85, 90–92 (ENQ), and Gln-96. Cys-39 serves as the catalytic Nucleophile. NADP(+) is bound at residue 164–169 (GAGEMG).

It belongs to the glutamyl-tRNA reductase family. In terms of assembly, homodimer.

It catalyses the reaction (S)-4-amino-5-oxopentanoate + tRNA(Glu) + NADP(+) = L-glutamyl-tRNA(Glu) + NADPH + H(+). The protein operates within porphyrin-containing compound metabolism; protoporphyrin-IX biosynthesis; 5-aminolevulinate from L-glutamyl-tRNA(Glu): step 1/2. Catalyzes the NADPH-dependent reduction of glutamyl-tRNA(Glu) to glutamate 1-semialdehyde (GSA). This is Glutamyl-tRNA reductase from Methanococcus maripaludis (strain C5 / ATCC BAA-1333).